The primary structure comprises 280 residues: Exfoliative toxin A (280 aa).

Positions 1 to 38 (MNNSKIISKVLLSLSLFTVGASAFVIQDELMQKNHAKA) are cleaved as a signal peptide. Catalysis depends on charge relay system residues histidine 110, aspartate 158, and serine 233.

It belongs to the peptidase S1B family. Ca(2+) serves as cofactor.

In terms of biological role, has serine protease-like properties and binds to the skin protein profilaggrin. Cleaves substrates after acidic residues. Exfoliative toxins cause impetigous diseases commonly referred as staphylococcal scalded skin syndrome (SSSS). This is Exfoliative toxin A (eta) from Staphylococcus aureus.